The chain runs to 828 residues: Deubiquitinase MYSM1 (828 aa).

Residues 1 to 12 are compositionally biased toward acidic residues; it reads MAAEEADVDIEG. The tract at residues 1–31 is disordered; sequence MAAEEADVDIEGDVVAAAGAQPGSGENTASV. At Ser-110 the chain carries Phosphoserine. In terms of domain architecture, SANT spans 116–167; sequence SYSVKWTIEEKELFEQGLAKFGRRWTKISKLIGSRTVLQVKSYARQYFKNKV. Lys-187 is covalently cross-linked (Glycyl lysine isopeptide (Lys-Gly) (interchain with G-Cter in SUMO2)). Ser-218 carries the phosphoserine modification. A Phosphothreonine modification is found at Thr-236. A phosphoserine mark is found at Ser-242, Ser-267, and Ser-340. The 99-residue stretch at 372–470 folds into the SWIRM domain; sequence LKPPEQEIEI…FGCEQAVYNR (99 aa). One can recognise an MPN domain in the interval 577–709; sequence VKVASEALLI…PLPYSQITCL (133 aa). Zn(2+)-binding residues include His-656, His-658, and Asp-669. Positions 656–669 match the JAMM motif motif; it reads HSHPAFDPNPSLRD. The LXXLL motif motif lies at 774–778; the sequence is LQKLL.

This sequence belongs to the peptidase M67A family. MYSM1 subfamily. As to quaternary structure, component of a large chromatin remodeling complex, at least composed of MYSM1, PCAF, RBM10 and KIF11/TRIP5. Binds histones. Interacts with NFIL3; this interaction is critical for their correct recruitment to the ID2 locus during natural killer cell maturation.

The protein resides in the nucleus. Its subcellular location is the cytoplasm. In terms of biological role, metalloprotease with deubiquitinase activity that plays important regulator roles in hematopoietic stem cell function, blood cell production and immune response. Participates in the normal programming of B-cell responses to antigen after the maturation process. Within the cytoplasm, plays critical roles in the repression of innate immunity and autoimmunity. Removes 'Lys-63'-linked polyubiquitins from TRAF3 and TRAF6 complexes. Attenuates NOD2-mediated inflammation and tissue injury by promoting 'Lys-63'-linked deubiquitination of RIPK2 component. Suppresses the CGAS-STING1 signaling pathway by cleaving STING1 'Lys-63'-linked ubiquitin chains. In the nucleus, acts as a hematopoietic transcription regulator derepressing a range of genes essential for normal stem cell differentiation including EBF1 and PAX5 in B-cells, ID2 in NK-cell progenitor or FLT3 in dendritic cell precursors. Deubiquitinates monoubiquitinated histone H2A, a specific tag for epigenetic transcriptional repression, leading to dissociation of histone H1 from the nucleosome. The polypeptide is Deubiquitinase MYSM1 (MYSM1) (Homo sapiens (Human)).